A 1067-amino-acid polypeptide reads, in one-letter code: MSSQNSFMASKKEDKGKNIQVVVRCRPFNQLERKASSHSVLECDSQRKEVYVRTGEVNDKLGKKTYTFDMVFGPAAKQIEVYRSVVCPILDEVIMGYNCTIFAYGQTGTGKTFTMEGERSSDEEFTWEQDPLAGIIPRTLHQIFEKLSENGTEFSVKVSLLEIYNEELFDLLSPSPDVGERLQMFDDPRNKRGVIIKGLEEISVHNKDEVYHILERGAARRKTASTLMNAYSSRSHSVFSVTIHMKETTVDGEELVKIGKLNLVDLAGSENIGRSGAVDKRAREAGNINQSLLTLGRVITALVERTPHIPYRESKLTRILQDSLGGRTKTSIIATVSPASINLEETVSTLDYANRAKSIMNKPEVNQKLTKKALIKEYTEEIERLKRELAAAREKNGVYLSSENYEQLQGKVLSQEEMITEYTEKITAMEEELKSISELFADNKKELEECTTILQCKEKELEETQNHLQESKEQLAQESFVVSAFETTEKKLHGTANKLLSTVRETTRDVSGLHEKLDRKKAVDQHNFQVHENFAEQMDRRFSVIQRTVDDYSVKQQGMLDFYTNSIDDLLGASSSRLSATASAVAKSFASVQETVTKQVSHSVEEILKQETLSSQAKGDLQQLMAAHRTGLEEALRSDLLPVVTAVLDLNSHLSHCLQNFLIVADKIDSHKEDMNSFFTEHSRSLHKLRLDSSSALSSIQSEYESLKEDIATAQSMHSEGVNNLISSLQNQLNLLGMETQQQFSGFLSKGGKLQKSVGSLQQDLDLVSSEAIECISSHHKKLAEQSQDVAVEIRQLAGSNMSTLEESSKQCEKLTSSINTISQESQQWCESAGQKIDSVLEEQVCYLHSSKKHLQNLHKGVEDSCGSSVVEITDRVNAQRQAEEKALTSLVEQVRDDQEMVGEQRLELQEQVQSGLNKVHSYLKEELRNDVPTGTTPQRRDYAYPSLLVKTKPRDVLLEQFRQQQQEYLESISSVISEAVEPPVEQDSLEDEPPVAVNDSVISERSCIDLSMTCQEKGGIRFFQQKKALRKEKENRGNTTLLERSKIMDEVDQALTKSKLPLRMQN.

In terms of domain architecture, Kinesin motor spans 18–359 (NIQVVVRCRP…LDYANRAKSI (342 aa)). 105–112 (GQTGTGKT) contacts ATP. Residues 365 to 480 (VNQKLTKKAL…SKEQLAQESF (116 aa)) adopt a coiled-coil conformation. A Phosphothreonine; by CDK1 modification is found at threonine 937. A Phosphoserine; by NEK6 modification is found at serine 1046.

The protein belongs to the TRAFAC class myosin-kinesin ATPase superfamily. Kinesin family. BimC subfamily. In terms of assembly, heterotetramer of two heavy and two light chains. Interacts with aurka. Phosphorylation of Thr-937 during mitosis controls the association of this protein with the spindle apparatus. In terms of processing, a subset of this protein primarily localized at the spindle pole is phosphorylated by NEK6 during mitosis. Post-translationally, phosphorylated on a serine residue by aurka. As to expression, in unfertilized eggs, shows highest expression in the germinal vesicle and radial yolk-poor channels. Also present in testis.

The protein localises to the cytoplasm. The protein resides in the cytoskeleton. It localises to the spindle pole. Plus end-directed motor protein required for establishing a bipolar spindle. Associates with both interphase and spindle microtubules. May be involved in nuclear divisions taking place during the development of unfertilized eggs. Required in non-mitotic cells for transport of secretory proteins from the Golgi complex to the cell surface. This Xenopus laevis (African clawed frog) protein is Kinesin-like protein KIF11-B (kif11-b).